The primary structure comprises 216 residues: Uracil-DNA glycosylase (216 aa).

Asp-59 functions as the Proton acceptor in the catalytic mechanism.

The protein belongs to the uracil-DNA glycosylase (UDG) superfamily. UNG family.

It localises to the cytoplasm. The catalysed reaction is Hydrolyzes single-stranded DNA or mismatched double-stranded DNA and polynucleotides, releasing free uracil.. Functionally, excises uracil residues from the DNA which can arise as a result of misincorporation of dUMP residues by DNA polymerase or due to deamination of cytosine. The polypeptide is Uracil-DNA glycosylase (Idiomarina loihiensis (strain ATCC BAA-735 / DSM 15497 / L2-TR)).